The sequence spans 229 residues: Large ribosomal subunit protein bL25 (229 aa).

2 disordered regions span residues 1–21 (MSDALTLPAEARERAGKGASR) and 187–229 (PSAL…KGDD). Residues 196-207 (SEEEEDGEEVDA) are compositionally biased toward acidic residues.

The protein belongs to the bacterial ribosomal protein bL25 family. CTC subfamily. As to quaternary structure, part of the 50S ribosomal subunit; part of the 5S rRNA/L5/L18/L25 subcomplex. Contacts the 5S rRNA. Binds to the 5S rRNA independently of L5 and L18.

This is one of the proteins that binds to the 5S RNA in the ribosome where it forms part of the central protuberance. The sequence is that of Large ribosomal subunit protein bL25 from Erythrobacter litoralis (strain HTCC2594).